The following is a 524-amino-acid chain: Cytochrome P450 monooxygenase alt1 (524 aa).

The chain crosses the membrane as a helical span at residues 24 to 44 (IANMLSVIAFSICISPIVYFL). Cys469 contacts heme.

It belongs to the cytochrome P450 family. Heme serves as cofactor.

It is found in the membrane. It participates in secondary metabolite biosynthesis. Cytochrome P450 monooxygenase; part of the gene cluster that mediates the biosynthesis of alternapyrone derivatives. Alternapyrone is a decaketide with octa-methylation from methionine on every C2 unit except the third unit. All the domains in the polyketide synthase alt5 are apparently involved in alternapyrone synthesis, that is, the 8 CMeT, 7 KR, 7 DH, and 4 ER reactions in the 9 KS-mediated condensation steps required for alternapyrone synthesis. the alternapyrone produced by alt5 might be intensively modified by cytochrome P450 monooxygenases alt1, alt2 and alt3 and FAD-dependent oxidoreductase alt4 present in the alt gene cluster. This is Cytochrome P450 monooxygenase alt1 from Alternaria solani.